Here is a 373-residue protein sequence, read N- to C-terminus: MASENNGSRSDSESITAPKADSTVVEPRKIALITGITGQDGSYLTEFLLGKGYEVHGLIRRSSNFNTQRINHIYIDPHNVNKALMKLHYADLTDASSLRRWIDVIKPDEVYNLAAQSHVAVSFEIPDYTADVVATGALRLLEAVRSHTIDSGRTVKYYQAGSSEMFGSTPPPQSETTPFHPRSPYAASKCAAHWYTVNYREAYGLFACNGILFNHESPRRGENFVTRKITRALGRIKVGLQTKLFLGNLQASRDWGFAGDYVEAMWLMLQQEKPDDYVVATEEGHTVEEFLDVSFGYLGLNWKDYVEIDQRYFRPAEVDNLQGDASKAKEVLGWKPQVGFEKLVKMMVDEDLELAKREKVLVDAGYMDAKQQP.

A compositionally biased stretch (polar residues) spans 1–15 (MASENNGSRSDSESI). Residues 1-21 (MASENNGSRSDSESITAPKAD) are disordered. Residues 35–40 (GITGQD), R60, 91–92 (DL), 113–117 (LAAQS), and Y128 contribute to the NADP(+) site. Substrate is bound at residue S117. S162 serves as a coordination point for substrate. Residue S162 is part of the active site. Active-site nucleophile residues include E164 and Y185. Y185 contributes to the substrate binding site. Position 189 (K189) interacts with NADP(+). N214 provides a ligand contact to substrate. Residues H215 and R220 each contribute to the NADP(+) site. Residues 220 to 228 (RGENFVTRK), G247, R253, and 314 to 317 (RPAE) each bind substrate.

This sequence belongs to the NAD(P)-dependent epimerase/dehydratase family. GDP-mannose 4,6-dehydratase subfamily. Homotetramer. Binds to GER1. The cofactor is NADP(+). Expressed in roots, flowers, siliques, leaves and stems. Not expressed in the root meristem and the proximal part of the elongation zone, or in emerging lateral roots. Expressed in trichomes and guard cells, and in pollen just before anthesis.

The catalysed reaction is GDP-alpha-D-mannose = GDP-4-dehydro-alpha-D-rhamnose + H2O. It functions in the pathway nucleotide-sugar biosynthesis; GDP-L-fucose biosynthesis via de novo pathway; GDP-L-fucose from GDP-alpha-D-mannose: step 1/2. In terms of biological role, catalyzes the conversion of GDP-D-mannose to GDP-4-dehydro-6-deoxy-D-mannose. This Arabidopsis thaliana (Mouse-ear cress) protein is GDP-mannose 4,6 dehydratase 2 (MUR1).